A 92-amino-acid chain; its full sequence is DNA-directed RNA polymerase subunit omega (92 aa).

Belongs to the RNA polymerase subunit omega family. As to quaternary structure, the RNAP catalytic core consists of 2 alpha, 1 beta, 1 beta' and 1 omega subunit. When a sigma factor is associated with the core the holoenzyme is formed, which can initiate transcription.

It catalyses the reaction RNA(n) + a ribonucleoside 5'-triphosphate = RNA(n+1) + diphosphate. Functionally, promotes RNA polymerase assembly. Latches the N- and C-terminal regions of the beta' subunit thereby facilitating its interaction with the beta and alpha subunits. The protein is DNA-directed RNA polymerase subunit omega of Shewanella sp. (strain ANA-3).